The following is a 245-amino-acid chain: 1-(5-phosphoribosyl)-5-[(5-phosphoribosylamino)methylideneamino] imidazole-4-carboxamide isomerase (245 aa).

Asp8 functions as the Proton acceptor in the catalytic mechanism. Asp129 serves as the catalytic Proton donor.

The protein belongs to the HisA/HisF family.

The protein localises to the cytoplasm. It catalyses the reaction 1-(5-phospho-beta-D-ribosyl)-5-[(5-phospho-beta-D-ribosylamino)methylideneamino]imidazole-4-carboxamide = 5-[(5-phospho-1-deoxy-D-ribulos-1-ylimino)methylamino]-1-(5-phospho-beta-D-ribosyl)imidazole-4-carboxamide. The protein operates within amino-acid biosynthesis; L-histidine biosynthesis; L-histidine from 5-phospho-alpha-D-ribose 1-diphosphate: step 4/9. The protein is 1-(5-phosphoribosyl)-5-[(5-phosphoribosylamino)methylideneamino] imidazole-4-carboxamide isomerase of Heliobacterium modesticaldum (strain ATCC 51547 / Ice1).